The primary structure comprises 901 residues: Disease resistance RPP8-like protein 3 (901 aa).

A coiled-coil region spans residues 15 to 56 (ALLNRESERLNGIDEQVDGLKRQLRGLQSLLKDADAKKHGSD). The NB-ARC domain maps to 144 to 453 (LQDIQREIRQ…AEGIYDGLTI (310 aa)). Residues 190 to 197 (GMGGIGKT) and 385 to 392 (GAQIVGKS) each bind ATP. LRR repeat units lie at residues 567-591 (LPLL…SIGG), 592-615 (LIHL…IRNL), and 833-858 (MPCL…KYVT).

The protein belongs to the disease resistance NB-LRR family. RPP8/HRT subfamily.

In terms of biological role, disease resistance protein. This Arabidopsis thaliana (Mouse-ear cress) protein is Disease resistance RPP8-like protein 3 (RPP8L3).